A 230-amino-acid polypeptide reads, in one-letter code: Large ribosomal subunit protein uL1 (230 aa).

It belongs to the universal ribosomal protein uL1 family. As to quaternary structure, part of the 50S ribosomal subunit.

Functionally, binds directly to 23S rRNA. The L1 stalk is quite mobile in the ribosome, and is involved in E site tRNA release. In terms of biological role, protein L1 is also a translational repressor protein, it controls the translation of the L11 operon by binding to its mRNA. The protein is Large ribosomal subunit protein uL1 of Leuconostoc mesenteroides subsp. mesenteroides (strain ATCC 8293 / DSM 20343 / BCRC 11652 / CCM 1803 / JCM 6124 / NCDO 523 / NBRC 100496 / NCIMB 8023 / NCTC 12954 / NRRL B-1118 / 37Y).